Reading from the N-terminus, the 258-residue chain is Imidazole glycerol phosphate synthase subunit HisF (258 aa).

Catalysis depends on residues aspartate 12 and aspartate 131.

This sequence belongs to the HisA/HisF family. In terms of assembly, heterodimer of HisH and HisF.

It is found in the cytoplasm. The catalysed reaction is 5-[(5-phospho-1-deoxy-D-ribulos-1-ylimino)methylamino]-1-(5-phospho-beta-D-ribosyl)imidazole-4-carboxamide + L-glutamine = D-erythro-1-(imidazol-4-yl)glycerol 3-phosphate + 5-amino-1-(5-phospho-beta-D-ribosyl)imidazole-4-carboxamide + L-glutamate + H(+). It functions in the pathway amino-acid biosynthesis; L-histidine biosynthesis; L-histidine from 5-phospho-alpha-D-ribose 1-diphosphate: step 5/9. Its function is as follows. IGPS catalyzes the conversion of PRFAR and glutamine to IGP, AICAR and glutamate. The HisF subunit catalyzes the cyclization activity that produces IGP and AICAR from PRFAR using the ammonia provided by the HisH subunit. The protein is Imidazole glycerol phosphate synthase subunit HisF of Sinorhizobium fredii (strain NBRC 101917 / NGR234).